Reading from the N-terminus, the 129-residue chain is UPF0212 protein Mbar_A2902 (129 aa).

The protein belongs to the UPF0212 family.

The polypeptide is UPF0212 protein Mbar_A2902 (Methanosarcina barkeri (strain Fusaro / DSM 804)).